Here is a 21-residue protein sequence, read N- to C-terminus: CLGVGSCNDFAGCGYAIVCFW.

Residues 1 to 9 constitute a cross-link (3-cysteinyl-aspartic acid (Cys-Asp)); it reads CLGVGSCND. 2 cysteine pairs are disulfide-bonded: C1-C13 and C7-C19. At W21 the chain carries D-tryptophan.

In terms of biological role, inhibits chicken myosin light chain kinase with an IC(50) of 8 M. Does not inhibit bovine cAMP-dependent protein kinase or rat protein kinase C. Antibacterial activity against the Gram-positive bacteria B.subtilis, E.faecium and S.aureus. No antibacterial activity against the Gram-negative bacteria E.coli, K.pneumoniae, P.aeruginosa, P.vulgaris, S.sonnei and S.typhosa. No antifungal activity against C.albicans. The polypeptide is Tricyclic peptide MS-271 (Streptomyces sp).